The chain runs to 185 residues: Urease accessory protein UreE (185 aa).

Residues 153-185 are disordered; that stretch reads LRANSAQGHGHSHSHSHDHHGYHHHGDGHWHKH. The segment covering 162-175 has biased composition (basic residues); sequence GHSHSHSHDHHGYH. The span at 176 to 185 shows a compositional bias: basic and acidic residues; that stretch reads HHGDGHWHKH.

Belongs to the UreE family.

The protein resides in the cytoplasm. Functionally, involved in urease metallocenter assembly. Binds nickel. Probably functions as a nickel donor during metallocenter assembly. This chain is Urease accessory protein UreE, found in Haemophilus influenzae (strain PittEE).